A 325-amino-acid chain; its full sequence is Lipoyl synthase (325 aa).

The tract at residues 1 to 31 is disordered; the sequence is MANLIDNTARSAASDARAARHPEKQKRADTP. Over residues 17–31 the composition is skewed to basic and acidic residues; sequence RAARHPEKQKRADTP. The [4Fe-4S] cluster site is built by C65, C70, C76, C91, C95, C98, and S304. A Radical SAM core domain is found at 77–293; the sequence is WEQKHATFMI…ETIARAKGFL (217 aa).

The protein belongs to the radical SAM superfamily. Lipoyl synthase family. [4Fe-4S] cluster serves as cofactor.

The protein resides in the cytoplasm. The catalysed reaction is [[Fe-S] cluster scaffold protein carrying a second [4Fe-4S](2+) cluster] + N(6)-octanoyl-L-lysyl-[protein] + 2 oxidized [2Fe-2S]-[ferredoxin] + 2 S-adenosyl-L-methionine + 4 H(+) = [[Fe-S] cluster scaffold protein] + N(6)-[(R)-dihydrolipoyl]-L-lysyl-[protein] + 4 Fe(3+) + 2 hydrogen sulfide + 2 5'-deoxyadenosine + 2 L-methionine + 2 reduced [2Fe-2S]-[ferredoxin]. Its pathway is protein modification; protein lipoylation via endogenous pathway; protein N(6)-(lipoyl)lysine from octanoyl-[acyl-carrier-protein]: step 2/2. Functionally, catalyzes the radical-mediated insertion of two sulfur atoms into the C-6 and C-8 positions of the octanoyl moiety bound to the lipoyl domains of lipoate-dependent enzymes, thereby converting the octanoylated domains into lipoylated derivatives. This is Lipoyl synthase from Maricaulis maris (strain MCS10) (Caulobacter maris).